A 458-amino-acid polypeptide reads, in one-letter code: Argininosuccinate lyase (458 aa).

The protein belongs to the lyase 1 family. Argininosuccinate lyase subfamily.

It localises to the cytoplasm. The catalysed reaction is 2-(N(omega)-L-arginino)succinate = fumarate + L-arginine. It participates in amino-acid biosynthesis; L-arginine biosynthesis; L-arginine from L-ornithine and carbamoyl phosphate: step 3/3. The protein is Argininosuccinate lyase of Anoxybacillus flavithermus (strain DSM 21510 / WK1).